A 311-amino-acid polypeptide reads, in one-letter code: N-acetylmuramic acid 6-phosphate etherase (311 aa).

Residues 66 to 229 (VADRMARGGR…STITMIRLGK (164 aa)) enclose the SIS domain. Residue Glu94 is the Proton donor of the active site. The active site involves Glu125.

It belongs to the GCKR-like family. MurNAc-6-P etherase subfamily. As to quaternary structure, homodimer.

It carries out the reaction N-acetyl-D-muramate 6-phosphate + H2O = N-acetyl-D-glucosamine 6-phosphate + (R)-lactate. Its pathway is amino-sugar metabolism; N-acetylmuramate degradation. Its function is as follows. Specifically catalyzes the cleavage of the D-lactyl ether substituent of MurNAc 6-phosphate, producing GlcNAc 6-phosphate and D-lactate. The chain is N-acetylmuramic acid 6-phosphate etherase from Streptomyces avermitilis (strain ATCC 31267 / DSM 46492 / JCM 5070 / NBRC 14893 / NCIMB 12804 / NRRL 8165 / MA-4680).